Reading from the N-terminus, the 369-residue chain is 2-aminoethylphosphonate--pyruvate transaminase 1 (369 aa).

The residue at position 191 (Lys191) is an N6-(pyridoxal phosphate)lysine.

Belongs to the class-V pyridoxal-phosphate-dependent aminotransferase family. PhnW subfamily. In terms of assembly, homodimer. It depends on pyridoxal 5'-phosphate as a cofactor.

The enzyme catalyses (2-aminoethyl)phosphonate + pyruvate = phosphonoacetaldehyde + L-alanine. Involved in phosphonate degradation. The polypeptide is 2-aminoethylphosphonate--pyruvate transaminase 1 (Burkholderia lata (strain ATCC 17760 / DSM 23089 / LMG 22485 / NCIMB 9086 / R18194 / 383)).